The sequence spans 453 residues: MTTDTIVAQATAPGRGGVGIIRISGDKATDVAMAVLGHLPKPRYADYCDFKNASGQVIDQGIALYFKGPNSFTGEDVLELQGHGGQIVLDMLIKRVLEVEGIRIAKPGEFSEQAFMNDKLDLTQAEAIADLIDATSEQAAKSALQSLQGEFSKEVHELVDQVTHLRLYVEAAIDFPDEEVDFLSDGKIANALYKIIDKLSVVQASAKQGSIIREGMKVVIAGRPNAGKSSLLNALAGKESAIVTEIAGTTRDVLREHIHLDGMPLHIIDTAGLRDTTDTVEQIGIERAWNEINSADRVLFMVDGTTTDAVDPHDIWPDFINRLPANLGVTVVRNKADLTGENLAMTEEKGYSVYRISAKTGLGVEELKQHLKSLMGYQSNLEGGFIARRRHLEALDIAASHLQLGKEQLEIYLAGELLAEELRMAQLALSEITGRFTSDDLLGKIFSSFCIGK.

Residues Arg22, Glu79, and Lys119 each contribute to the (6S)-5-formyl-5,6,7,8-tetrahydrofolate site. The 162-residue stretch at 215–376 (GMKVVIAGRP…LKQHLKSLMG (162 aa)) folds into the TrmE-type G domain. Asn225 is a K(+) binding site. GTP contacts are provided by residues 225–230 (NAGKSS), 244–250 (TEIAGTT), 269–272 (DTAG), and 334–337 (NKAD). Ser229 lines the Mg(2+) pocket. K(+) is bound by residues Thr244, Ile246, and Thr249. Thr250 is a binding site for Mg(2+). Lys453 is a binding site for (6S)-5-formyl-5,6,7,8-tetrahydrofolate.

Belongs to the TRAFAC class TrmE-Era-EngA-EngB-Septin-like GTPase superfamily. TrmE GTPase family. Homodimer. Heterotetramer of two MnmE and two MnmG subunits. K(+) is required as a cofactor.

It localises to the cytoplasm. Exhibits a very high intrinsic GTPase hydrolysis rate. Involved in the addition of a carboxymethylaminomethyl (cmnm) group at the wobble position (U34) of certain tRNAs, forming tRNA-cmnm(5)s(2)U34. The sequence is that of tRNA modification GTPase MnmE from Shewanella sp. (strain MR-7).